We begin with the raw amino-acid sequence, 162 residues long: General odorant-binding protein 2 (162 aa).

Residues 1 to 18 (MTSKSCLLLVAMVTLTTS) form the signal peptide. 3 disulfides stabilise this stretch: C40–C75, C71–C129, and C118–C138.

The protein belongs to the PBP/GOBP family. In terms of tissue distribution, antenna.

Present in the aqueous fluid surrounding olfactory sensory dendrites and are thought to aid in the capture and transport of hydrophobic odorants into and through this fluid. This chain is General odorant-binding protein 2, found in Heliothis virescens (Tobacco budworm moth).